The chain runs to 312 residues: Probable splicing factor, arginine/serine-rich 1 (312 aa).

An RRM 1 domain is found at 3–73 (ARIYIGRLTS…ERVILDYSKP (71 aa)). Disordered stretches follow at residues 69–125 (DYSK…GRPY) and 196–312 (KMID…DGDN). The span at 74–90 (RGGGGDRGGFGGGGRGG) shows a compositional bias: gly residues. Basic and acidic residues predominate over residues 103-121 (GRDRFDRYDRGPPRRESRY). One can recognise an RRM 2 domain in the interval 129-202 (HRVVVENLSS…RKIKMIDDSQ (74 aa)). Positions 206 to 259 (SRSRSNSRSRSRSRSRDRRRSRSRSSSRSKSRSRSPPKRSRRESKSKSRSRSRS) are enriched in basic residues.

The protein belongs to the splicing factor SR family. Post-translationally, extensively phosphorylated on serine residues in the RS domain.

The protein resides in the nucleus. Functionally, plays a functionally redundant role in spermatogenesis and growth rate control. This chain is Probable splicing factor, arginine/serine-rich 1 (rsp-1), found in Caenorhabditis elegans.